The chain runs to 148 residues: Copper transport protein ctr6 (148 aa).

At 1 to 33 the chain is on the extracellular side; sequence MNHGGNSTMRHCSMKMTFNTDYDNLCIVFKSWH. Residues 34–54 form a helical membrane-spanning segment; that stretch reads IGNLSQFLLSLLAIAILGYLF. Residues 55–108 lie on the Cytoplasmic side of the membrane; the sequence is ERLRSFTSLKETEFQRGYAGQQSEGLLTHHSKSLKSGRPFRLCALYAVQLVFSY. The helical transmembrane segment at 109-129 threads the bilayer; it reads FLMLVAMTYNAYVILAIAIGA. Residues 130–148 lie on the Extracellular side of the membrane; it reads AFGYRRSHCDTVQTVGLCH.

It belongs to the copper transporter (Ctr) (TC 1.A.56) family. SLC31A subfamily. In terms of assembly, homotrimer.

It localises to the vacuole membrane. Functionally, mobilizes stored copper from the vacuole to the cytoplasm under conditions of copper limitation. The chain is Copper transport protein ctr6 (ctr6) from Schizosaccharomyces pombe (strain 972 / ATCC 24843) (Fission yeast).